The sequence spans 529 residues: MKEAKFIFVTGGVVSSLGKGLVASSVGALLQAHGFKIRIRKLDPYLNIDPGTMNPTQHGEVFVTEDGAETDLDLGHYERFTGIKATKDDNITTGKIYHELLKKERRGDYLGKTVQVIPHVTDLIKSFIFNGTEGLDFVICEIGGTVGDIESQPFLEAIRQVNYTLGKQRVILIHLTLIPYLAAAQELKTKPTQHSVRELNSAGLQPDIILCRSEKEIFDNQREKIAKLCNVSLSNVIPAPDVSHIYELPVLYSQCGLDTQILEHFHLSKPKPSLTEWDQIVHSIRHPTQEVTVSIVGKYTEFPDAYKSLVEALNHGAISNKVKVKINWVNSREKEEKPIGEKLQNSHAILVPGGFGDDGVEGKILAINYARTNNIPFFGICLGMQLAIIEFARNVVKLEDAHSEEFRNCKHPIVKLAGDQDDDLGGTMRLGAYKCNINANSKMMDAYSNTTISERHRHRYIINSDYKDDLEKNGLLCSGISEDGTCIEAVELESHPWFIGVQFHPEFQSKPFSPHPLFVSFVKAAIDKK.

Residues 1–267 are amidoligase domain; it reads MKEAKFIFVT…DTQILEHFHL (267 aa). Ser15 provides a ligand contact to CTP. Ser15 is a UTP binding site. Residues 16–21 and Asp73 contribute to the ATP site; that span reads SLGKGL. Asp73 and Glu141 together coordinate Mg(2+). CTP is bound by residues 148 to 150, 188 to 193, and Lys224; these read DIE and KTKPTQ. Residues 188-193 and Lys224 contribute to the UTP site; that span reads KTKPTQ. Residues 292–529 enclose the Glutamine amidotransferase type-1 domain; sequence TVSIVGKYTE…SFVKAAIDKK (238 aa). Gly354 is a binding site for L-glutamine. The Nucleophile; for glutamine hydrolysis role is filled by Cys381. Residues 382-385, Glu405, and Arg459 contribute to the L-glutamine site; that span reads LGMQ. Residues His504 and Glu506 contribute to the active site.

The protein belongs to the CTP synthase family. As to quaternary structure, homotetramer.

The enzyme catalyses UTP + L-glutamine + ATP + H2O = CTP + L-glutamate + ADP + phosphate + 2 H(+). The catalysed reaction is L-glutamine + H2O = L-glutamate + NH4(+). It catalyses the reaction UTP + NH4(+) + ATP = CTP + ADP + phosphate + 2 H(+). The protein operates within pyrimidine metabolism; CTP biosynthesis via de novo pathway; CTP from UDP: step 2/2. Its activity is regulated as follows. Allosterically activated by GTP, when glutamine is the substrate; GTP has no effect on the reaction when ammonia is the substrate. The allosteric effector GTP functions by stabilizing the protein conformation that binds the tetrahedral intermediate(s) formed during glutamine hydrolysis. Inhibited by the product CTP, via allosteric rather than competitive inhibition. In terms of biological role, catalyzes the ATP-dependent amination of UTP to CTP with either L-glutamine or ammonia as the source of nitrogen. Regulates intracellular CTP levels through interactions with the four ribonucleotide triphosphates. In Wolbachia pipientis wMel, this protein is CTP synthase.